Consider the following 286-residue polypeptide: Large ribosomal subunit protein uL4m (286 aa).

A mitochondrion-targeting transit peptide spans 1-26; the sequence is MTIKRNLVKTLQSIRYQATTATAHAE. A disordered region spans residues 85-132; that stretch reads RRVGASNPPGRSENGFSRRKLMPQKGSGRARVGDANSPTRHNGGRALA.

It belongs to the universal ribosomal protein uL4 family. In terms of assembly, component of the mitochondrial large ribosomal subunit (mt-LSU). Mature yeast 74S mitochondrial ribosomes consist of a small (37S) and a large (54S) subunit. The 37S small subunit contains a 15S ribosomal RNA (15S mt-rRNA) and 34 different proteins. The 54S large subunit contains a 21S rRNA (21S mt-rRNA) and 46 different proteins.

The protein resides in the mitochondrion. Its function is as follows. Component of the mitochondrial ribosome (mitoribosome), a dedicated translation machinery responsible for the synthesis of mitochondrial genome-encoded proteins, including at least some of the essential transmembrane subunits of the mitochondrial respiratory chain. The mitoribosomes are attached to the mitochondrial inner membrane and translation products are cotranslationally integrated into the membrane. This Saccharomyces cerevisiae (strain ATCC 204508 / S288c) (Baker's yeast) protein is Large ribosomal subunit protein uL4m (YML6).